We begin with the raw amino-acid sequence, 340 residues long: Uroporphyrinogen decarboxylase (340 aa).

Substrate is bound by residues 21–25 (RQAGR), D71, Y148, S203, and H316.

This sequence belongs to the uroporphyrinogen decarboxylase family. As to quaternary structure, homodimer.

It localises to the cytoplasm. The enzyme catalyses uroporphyrinogen III + 4 H(+) = coproporphyrinogen III + 4 CO2. It functions in the pathway porphyrin-containing compound metabolism; protoporphyrin-IX biosynthesis; coproporphyrinogen-III from 5-aminolevulinate: step 4/4. Functionally, catalyzes the decarboxylation of four acetate groups of uroporphyrinogen-III to yield coproporphyrinogen-III. In Campylobacter jejuni (strain RM1221), this protein is Uroporphyrinogen decarboxylase.